Reading from the N-terminus, the 65-residue chain is UPF0434 protein BBta_0300 (65 aa).

This sequence belongs to the UPF0434 family.

The chain is UPF0434 protein BBta_0300 from Bradyrhizobium sp. (strain BTAi1 / ATCC BAA-1182).